A 753-amino-acid polypeptide reads, in one-letter code: 5-methyltetrahydropteroyltriglutamate--homocysteine methyltransferase (753 aa).

5-methyltetrahydropteroyltri-L-glutamate-binding positions include 17-20 (RELK) and K117. L-homocysteine contacts are provided by residues 431–433 (IGS) and E484. L-methionine-binding positions include 431 to 433 (IGS) and E484. Residues 515–516 (RC) and W561 contribute to the 5-methyltetrahydropteroyltri-L-glutamate site. D599 contributes to the L-homocysteine binding site. D599 contacts L-methionine. E605 contributes to the 5-methyltetrahydropteroyltri-L-glutamate binding site. Zn(2+) is bound by residues H641, C643, and E665. H694 acts as the Proton donor in catalysis. C726 is a binding site for Zn(2+).

It belongs to the vitamin-B12 independent methionine synthase family. The cofactor is Zn(2+).

The catalysed reaction is 5-methyltetrahydropteroyltri-L-glutamate + L-homocysteine = tetrahydropteroyltri-L-glutamate + L-methionine. It functions in the pathway amino-acid biosynthesis; L-methionine biosynthesis via de novo pathway; L-methionine from L-homocysteine (MetE route): step 1/1. Catalyzes the transfer of a methyl group from 5-methyltetrahydrofolate to homocysteine resulting in methionine formation. The sequence is that of 5-methyltetrahydropteroyltriglutamate--homocysteine methyltransferase from Escherichia coli O6:K15:H31 (strain 536 / UPEC).